The chain runs to 284 residues: Putative ABC transporter ATP-binding protein PH1815 (284 aa).

Residues I4–K244 form the ABC transporter domain. G38–S45 is a binding site for ATP.

The protein belongs to the ABC transporter superfamily.

Its subcellular location is the cell membrane. In terms of biological role, probably part of an ABC transporter complex. Responsible for energy coupling to the transport system. The polypeptide is Putative ABC transporter ATP-binding protein PH1815 (Pyrococcus horikoshii (strain ATCC 700860 / DSM 12428 / JCM 9974 / NBRC 100139 / OT-3)).